A 213-amino-acid polypeptide reads, in one-letter code: Phospho-2-dehydro-3-deoxyheptonate aldolase, Tyr-sensitive (213 aa).

It belongs to the class-I DAHP synthase family.

It carries out the reaction D-erythrose 4-phosphate + phosphoenolpyruvate + H2O = 7-phospho-2-dehydro-3-deoxy-D-arabino-heptonate + phosphate. It participates in metabolic intermediate biosynthesis; chorismate biosynthesis; chorismate from D-erythrose 4-phosphate and phosphoenolpyruvate: step 1/7. In terms of biological role, stereospecific condensation of phosphoenolpyruvate (PEP) and D-erythrose-4-phosphate (E4P) giving rise to 3-deoxy-D-arabino-heptulosonate-7-phosphate (DAHP). The sequence is that of Phospho-2-dehydro-3-deoxyheptonate aldolase, Tyr-sensitive (aroF) from Enterobacter agglomerans (Erwinia herbicola).